The sequence spans 694 residues: Scarecrow-like protein 33 (694 aa).

Residues 289–313 (PAKASTFSKSPKGEKPEASGNSYTK) are disordered. A GRAS domain is found at 309–692 (NSYTKETPDL…RIVYGSSIWV (384 aa)). Positions 316–376 (PDLRTMLVSC…EARLAGIGTQ (61 aa)) are leucine repeat I (LRI). The VHIID stretch occupies residues 395–462 (YQTYISVCPF…GSSCKLRITG (68 aa)). The VHIID signature appears at 428–432 (IHIID). The interval 478–510 (ETGRRLAKYCQKFNIPFEYNAIAQKWESIKLED) is leucine repeat II (LRII). Positions 519 to 613 (VAVNSLFRFR…KEFYGREIMN (95 aa)) are PFYRE. The interval 616 to 692 (ACEGTERVER…RIVYGSSIWV (77 aa)) is SAW.

It belongs to the GRAS family. Interacts with SNRNP35.

The protein resides in the nucleus. Probable transcription factor involved in plant development. The chain is Scarecrow-like protein 33 (SCL33) from Arabidopsis thaliana (Mouse-ear cress).